The following is a 392-amino-acid chain: Phosphopentomutase (392 aa).

6 residues coordinate Mn(2+): aspartate 14, aspartate 286, histidine 291, aspartate 327, histidine 328, and histidine 339.

It belongs to the phosphopentomutase family. The cofactor is Mn(2+).

Its subcellular location is the cytoplasm. The enzyme catalyses 2-deoxy-alpha-D-ribose 1-phosphate = 2-deoxy-D-ribose 5-phosphate. It catalyses the reaction alpha-D-ribose 1-phosphate = D-ribose 5-phosphate. Its pathway is carbohydrate degradation; 2-deoxy-D-ribose 1-phosphate degradation; D-glyceraldehyde 3-phosphate and acetaldehyde from 2-deoxy-alpha-D-ribose 1-phosphate: step 1/2. In terms of biological role, isomerase that catalyzes the conversion of deoxy-ribose 1-phosphate (dRib-1-P) and ribose 1-phosphate (Rib-1-P) to deoxy-ribose 5-phosphate (dRib-5-P) and ribose 5-phosphate (Rib-5-P), respectively. The chain is Phosphopentomutase from Staphylococcus aureus (strain Mu3 / ATCC 700698).